Reading from the N-terminus, the 474-residue chain is Coiled-coil domain-containing protein 174 (474 aa).

2 disordered regions span residues Gly39–Leu86 and Gly129–Glu170. Composition is skewed to basic and acidic residues over residues Arg64 to Leu86 and Gly129 to Ala142. The stretch at Arg64–Lys98 forms a coiled coil. Positions Asn148 to Ser157 are enriched in acidic residues. A Phosphoserine modification is found at Ser206. A coiled-coil region spans residues Leu276–Lys317. 2 disordered regions span residues Arg309 to Trp372 and Glu389 to Gln461. Composition is skewed to basic and acidic residues over residues Ser316 to Ala327 and Ile356 to Trp372. Residues Arg410 to Trp419 are compositionally biased toward polar residues. The segment covering Gly430–Pro453 has biased composition (low complexity).

Its subcellular location is the nucleus. Probably involved in neuronal development. The sequence is that of Coiled-coil domain-containing protein 174 (Ccdc174) from Rattus norvegicus (Rat).